We begin with the raw amino-acid sequence, 536 residues long: CRISPR-associated DNA-binding protein Cas12m (536 aa).

The recognition domain (REC1-N) stretch occupies residues 1–59; sequence MPFGKKARHVKAYQFGADAPQEGMEAVLEQHRLRTDYYNALVEMELRQREERTALLANL. A recognition domain (REC2) region spans residues 60 to 105; that stretch reads AAESGLESPNQVYERLKAAGEKGIRKHPEYVAARERQKALYGHPRL. The segment at 106–159 is recognition domain (REC1-C); sequence LELQSRQREERNALRRSFGAKGLYSSNYLDVERAFDKARQSPELRFRRYSPHEG. Residues 160 to 257 are wedge domain (WED); that stretch reads RLAVLYTEGL…RWTVSVVVEV (98 aa). Residues 258 to 270 are linker; sequence EGPPVASPTGRGA. The tract at residues 271–481 is ruvC-I; that stretch reads VAVDLGWRRV…QRGKPVRKLN (211 aa). A target nucleic-acid binding (TNB) region spans residues 482 to 516; it reads PAHTTTDCHACGGALVGDPAKELRLYCPTCERFYD. Residues C489, C492, C508, and C511 each contribute to the Zn(2+) site. Residues 517 to 536 form a ruvC-II region; the sequence is QDENAARNLLRRAQEVQAQV. D518 is a Mg(2+) binding site.

This sequence belongs to the CRISPR-associated DNA-binding protein Cas12m family. Requires Mg(2+) as cofactor. Zn(2+) serves as cofactor.

Pre-crRNA processing is inhibited by EDTA. CRISPR (clustered regularly interspaced short palindromic repeat), is an adaptive immune system that provides protection against mobile genetic elements (viruses, transposable elements and conjugative plasmids). CRISPR clusters contain sequences complementary to antecedent mobile elements and target invading nucleic acids. CRISPR clusters are transcribed and processed into CRISPR RNA (crRNA). Recognizes a short motif in the CRISPR repeat sequences (the 5' PAM or protospacer adjacent motif, 5'-TT/CN-3' in this organism) to help distinguish self versus nonself, as targets within the bacterial CRISPR locus do not have PAMs. Cas12m-crRNA binds DNA in a PAM-dependent, crRNA-guided fashion. DNA-binding probably inhibits transcription, leading to gene silencing. No dsDNA, ssDNA or RNA nuclease activity is seen for the crRNA-Cas12m complex. Upon expression in E.coli as a CRISPR region preferentially binds to its associated crRNA. Is required to process pre-crRNA to mature crRNA without a tracrRNA; processing is Mg(2+)-dependent and does not require the predicted RuvC domain catalytic site. The polypeptide is CRISPR-associated DNA-binding protein Cas12m (Allomeiothermus silvanus (strain ATCC 700542 / DSM 9946 / NBRC 106475 / NCIMB 13440 / VI-R2) (Thermus silvanus)).